The primary structure comprises 153 residues: Large ribosomal subunit protein uL15 (153 aa).

The disordered stretch occupies residues 21 to 41; sequence RGIGSGKGKTGGRGIKGQKSR. Positions 23 to 35 are enriched in gly residues; it reads IGSGKGKTGGRGI.

Belongs to the universal ribosomal protein uL15 family. As to quaternary structure, part of the 50S ribosomal subunit.

In terms of biological role, binds to the 23S rRNA. In Rickettsia rickettsii (strain Iowa), this protein is Large ribosomal subunit protein uL15.